Reading from the N-terminus, the 217-residue chain is Chloramphenicol acetyltransferase (217 aa).

The active-site Proton acceptor is His-193.

The protein belongs to the chloramphenicol acetyltransferase family. As to quaternary structure, homotrimer.

It carries out the reaction chloramphenicol + acetyl-CoA = chloramphenicol 3-acetate + CoA. This enzyme is an effector of chloramphenicol resistance in bacteria. This is Chloramphenicol acetyltransferase (cat) from Proteus mirabilis.